The sequence spans 156 residues: Small ribosomal subunit protein uS7 (156 aa).

Belongs to the universal ribosomal protein uS7 family. Part of the 30S ribosomal subunit. Contacts proteins S9 and S11.

In terms of biological role, one of the primary rRNA binding proteins, it binds directly to 16S rRNA where it nucleates assembly of the head domain of the 30S subunit. Is located at the subunit interface close to the decoding center, probably blocks exit of the E-site tRNA. This is Small ribosomal subunit protein uS7 from Cutibacterium acnes (strain DSM 16379 / KPA171202) (Propionibacterium acnes).